The sequence spans 216 residues: Redox-sensing transcriptional repressor Rex (216 aa).

The segment at residues 16–55 (VYYRYLNVLLNANKHRVSSTELSEAVQVDSATIRRDFSYF) is a DNA-binding region (H-T-H motif). 90 to 95 (GVGSLG) provides a ligand contact to NAD(+).

Belongs to the transcriptional regulatory Rex family. In terms of assembly, homodimer.

The protein resides in the cytoplasm. Its function is as follows. Modulates transcription in response to changes in cellular NADH/NAD(+) redox state. This is Redox-sensing transcriptional repressor Rex from Limosilactobacillus fermentum (strain NBRC 3956 / LMG 18251) (Lactobacillus fermentum).